The chain runs to 136 residues: Cyclase aurE (136 aa).

This sequence belongs to the aurE cyclase family.

The protein operates within polyketide biosynthesis. Its function is as follows. Cyclase; part of the gene cluster that mediates the biosynthesis of aurovertins, fungal polyketides that exhibit potent inhibition of adenosine triphosphate synthase. Tha biosynthesis starts with the HR-PKS aurA that selects propionate as the starter unit; synthesizes a hexa-ene chain through the repeated functions of the KR and DH domains in the first six iterations; selectively introduces three alpha-methyl substitutions at C4, C6, and C16 using the S-adensylmethionine-dependent cMET; and shuts off KR and DH in the last three iterations to afford a 1,3,5-triketo portion that can undergo intramolecular cyclization to yield the alpha-pyrone intermediate. AurE may act as a cyclase and enhances the rate of pyrone formation and product release of aurA. The methyltransferase aurB then methylates the C17 hydroxyl group. C17 methylation is required to initiate epoxidation by the downstream monooxygenase aurC. The monooxygenase aurC and the epoxide hydrolase aurD can iteratively transform the terminal triene portion of the methylated precursor into the dioxabicyclo[3.2.1]octane scaffold of aurovertin E. Epoxidation modifications of the precursor occur in two separate steps; bis-epoxidation of the two terminal olefins takes place first, followed by another epoxidation that occurs at C7-C8 after tetrahydrofuran formation. The O-acyltransferase aurG converts aurovertin E to aurovertin A. The sequence is that of Cyclase aurE from Calcarisporium arbuscula (Dendryphion arbuscula).